A 692-amino-acid polypeptide reads, in one-letter code: Methionine--tRNA ligase (692 aa).

The short motif at 12–22 is the 'HIGH' region element; that stretch reads PYANGPLHLGH. Residues Cys-143, Cys-146, Cys-156, and Cys-159 each contribute to the Zn(2+) site. The 'KMSKS' region signature appears at 330–334; that stretch reads KMSKS. Lys-333 provides a ligand contact to ATP. Positions 554–563 are enriched in low complexity; that stretch reads AAAAPAAKPA. The tract at residues 554 to 575 is disordered; that stretch reads AAAAPAAKPAAPAPAPAPAKDE. Residues 589–692 enclose the tRNA-binding domain; sequence DFAKLDLRIG…SGAQPGMPVR (104 aa).

It belongs to the class-I aminoacyl-tRNA synthetase family. MetG type 1 subfamily. Homodimer. The cofactor is Zn(2+).

Its subcellular location is the cytoplasm. It catalyses the reaction tRNA(Met) + L-methionine + ATP = L-methionyl-tRNA(Met) + AMP + diphosphate. In terms of biological role, is required not only for elongation of protein synthesis but also for the initiation of all mRNA translation through initiator tRNA(fMet) aminoacylation. This chain is Methionine--tRNA ligase, found in Stenotrophomonas maltophilia (strain K279a).